We begin with the raw amino-acid sequence, 178 residues long: Nascent polypeptide-associated complex subunit alpha (178 aa).

One can recognise an NAC-A/B domain in the interval 16–80 (PKNEKKAREL…AKVDDMNQRI (65 aa)). Over residues 82-100 (EAQAQQAQQEALQKAAADA) the composition is skewed to low complexity. Residues 82–145 (EAQAQQAQQE…DETGLDPKDI (64 aa)) form a disordered region. A compositionally biased stretch (basic and acidic residues) spans 101-126 (GKTEDKSPEAITADLEKASLGDKKAE). Residues 127 to 139 (DEEEDEGEIDETG) are compositionally biased toward acidic residues. One can recognise a UBA domain in the interval 140–178 (LDPKDIEIVVEQTQVSRAKAVKALRNHDGDMVNAIMDLS).

It belongs to the NAC-alpha family. Part of the nascent polypeptide-associated complex (NAC), consisting of EGD2 and EGD1. NAC associates with ribosomes via EGD1.

It is found in the cytoplasm. The protein resides in the nucleus. Its function is as follows. Component of the nascent polypeptide-associated complex (NAC), a dynamic component of the ribosomal exit tunnel, protecting the emerging polypeptides from interaction with other cytoplasmic proteins to ensure appropriate nascent protein targeting. The NAC complex also promotes mitochondrial protein import by enhancing productive ribosome interactions with the outer mitochondrial membrane and blocks the inappropriate interaction of ribosomes translating non-secretory nascent polypeptides with translocation sites in the membrane of the endoplasmic reticulum. EGD2 may also be involved in transcription regulation. The polypeptide is Nascent polypeptide-associated complex subunit alpha (EGD2) (Candida albicans (strain SC5314 / ATCC MYA-2876) (Yeast)).